Here is a 283-residue protein sequence, read N- to C-terminus: Acetylglutamate kinase (283 aa).

Substrate contacts are provided by residues 64–65 (GG), Arg-86, and Asn-178.

Belongs to the acetylglutamate kinase family. ArgB subfamily.

The protein resides in the cytoplasm. The enzyme catalyses N-acetyl-L-glutamate + ATP = N-acetyl-L-glutamyl 5-phosphate + ADP. The protein operates within amino-acid biosynthesis; L-arginine biosynthesis; N(2)-acetyl-L-ornithine from L-glutamate: step 2/4. Catalyzes the ATP-dependent phosphorylation of N-acetyl-L-glutamate. The polypeptide is Acetylglutamate kinase (Lactococcus lactis subsp. cremoris (strain SK11)).